We begin with the raw amino-acid sequence, 258 residues long: Tryptophan synthase alpha chain (258 aa).

Residues Glu52 and Asp63 each act as proton acceptor in the active site.

Belongs to the TrpA family. In terms of assembly, tetramer of two alpha and two beta chains.

The catalysed reaction is (1S,2R)-1-C-(indol-3-yl)glycerol 3-phosphate + L-serine = D-glyceraldehyde 3-phosphate + L-tryptophan + H2O. Its pathway is amino-acid biosynthesis; L-tryptophan biosynthesis; L-tryptophan from chorismate: step 5/5. Its function is as follows. The alpha subunit is responsible for the aldol cleavage of indoleglycerol phosphate to indole and glyceraldehyde 3-phosphate. This Streptococcus pneumoniae (strain JJA) protein is Tryptophan synthase alpha chain.